The chain runs to 122 residues: UPF0102 protein DIP1513 (122 aa).

The protein belongs to the UPF0102 family.

The chain is UPF0102 protein DIP1513 from Corynebacterium diphtheriae (strain ATCC 700971 / NCTC 13129 / Biotype gravis).